Reading from the N-terminus, the 1218-residue chain is Chitin synthase 4 (1218 aa).

Disordered regions lie at residues 1-93 and 132-190; these read MAEP…PERN and TVSS…RRQK. Residues 14-34 are compositionally biased toward basic and acidic residues; the sequence is TRDKSHSPYRESPSRRLRDVE. Asparagine 50 carries N-linked (GlcNAc...) asparagine glycosylation. 2 stretches are compositionally biased toward polar residues: residues 71 to 80 and 133 to 142; these read SNPNPMSQSD and VSSGSTQQDT. Residues 175–190 show a composition bias toward basic and acidic residues; that stretch reads RKDTRNLTEEEKRRQK. An N-linked (GlcNAc...) asparagine glycan is attached at asparagine 180. 2 helical membrane-spanning segments follow: residues 200-220 and 235-255; these read IWNIYCAVVTFWAPDCLLQCF and VGLISIILLIAAFVGFLTFGF. Residues asparagine 365, asparagine 404, and asparagine 426 are each glycosylated (N-linked (GlcNAc...) asparagine). The chain crosses the membrane as a helical span at residues 487–507; the sequence is VVLYVSLVFILAIVAAKFFLA. 2 disordered regions span residues 548 to 570 and 582 to 606; these read PKITDPASTVTGSDGRTSKRGSM and YAVDRRSSRPPPTTMTSQSSNAKLL. Residues 553–562 show a composition bias toward polar residues; it reads PASTVTGSDG. 3 N-linked (GlcNAc...) asparagine glycosylation sites follow: asparagine 617, asparagine 903, and asparagine 1030. 3 helical membrane-spanning segments follow: residues 1062-1082, 1087-1107, and 1115-1135; these read IGTLVLPAAISFTFYLIIISI, VPVIPLVLLALILGLPAILIV, and YILWMGIYLLSLPIWNFVLPA. The segment at 1188 to 1218 is disordered; that stretch reads QANGSVWNQQPPTRPPSGYGSMHGFEPYRDY. Over residues 1189 to 1198 the composition is skewed to polar residues; the sequence is ANGSVWNQQP. N-linked (GlcNAc...) asparagine glycosylation is present at asparagine 1190.

It belongs to the chitin synthase family. Class IV subfamily. Post-translationally, maximal activity requires trypsin activation, suggesting a zymogenic nature.

The protein localises to the cell membrane. The enzyme catalyses [(1-&gt;4)-N-acetyl-beta-D-glucosaminyl](n) + UDP-N-acetyl-alpha-D-glucosamine = [(1-&gt;4)-N-acetyl-beta-D-glucosaminyl](n+1) + UDP + H(+). With respect to regulation, activity is stimulated by Mg(2+), and is more inhibited by polyoxin D than by nikkomycin. In terms of biological role, polymerizes chitin, a structural polymer of the cell wall and septum, by transferring the sugar moiety of UDP-GlcNAc to the non-reducing end of the growing chitin polymer. CHS4 synthesizes a large amount of chitin and appears to play a role in the process of cell separation. CHS4 is particularly well suited for functioning at the higher temperatures associated with its poorly characterized saprophic environment and with human infection. This chain is Chitin synthase 4, found in Exophiala dermatitidis (strain ATCC 34100 / CBS 525.76 / NIH/UT8656) (Black yeast).